Here is a 354-residue protein sequence, read N- to C-terminus: Glutamine synthetase (354 aa).

Residues 22-101 (FHAEYVWIDG…VLSETYNNDG (80 aa)) enclose the GS beta-grasp domain. The GS catalytic domain maps to 108–354 (HRHHTAKVME…IIIETTILDK (247 aa)).

This sequence belongs to the glutamine synthetase family. As to quaternary structure, homooctamer.

The protein localises to the cytoplasm. It catalyses the reaction L-glutamate + NH4(+) + ATP = L-glutamine + ADP + phosphate + H(+). The polypeptide is Glutamine synthetase (GLN1) (Amanita muscaria (Fly agaric)).